The primary structure comprises 208 residues: Pyridoxine/pyridoxamine 5'-phosphate oxidase (208 aa).

FMN is bound by residues 53–58, 68–69, K75, and Q100; these read RTVLLK and YS. K58 lines the substrate pocket. Residues Y118, R122, and S126 each contribute to the substrate site. FMN is bound by residues 135-136 and W180; that span reads QS. 186–188 is a substrate binding site; the sequence is RLH. R190 provides a ligand contact to FMN.

Belongs to the pyridoxamine 5'-phosphate oxidase family. Homodimer. FMN serves as cofactor.

It catalyses the reaction pyridoxamine 5'-phosphate + O2 + H2O = pyridoxal 5'-phosphate + H2O2 + NH4(+). The enzyme catalyses pyridoxine 5'-phosphate + O2 = pyridoxal 5'-phosphate + H2O2. The protein operates within cofactor metabolism; pyridoxal 5'-phosphate salvage; pyridoxal 5'-phosphate from pyridoxamine 5'-phosphate: step 1/1. It participates in cofactor metabolism; pyridoxal 5'-phosphate salvage; pyridoxal 5'-phosphate from pyridoxine 5'-phosphate: step 1/1. Its function is as follows. Catalyzes the oxidation of either pyridoxine 5'-phosphate (PNP) or pyridoxamine 5'-phosphate (PMP) into pyridoxal 5'-phosphate (PLP). The polypeptide is Pyridoxine/pyridoxamine 5'-phosphate oxidase (Xylella fastidiosa (strain 9a5c)).